A 743-amino-acid polypeptide reads, in one-letter code: 1,4-alpha-glucan branching enzyme GlgB (743 aa).

Residue Asp416 is the Nucleophile of the active site. The active-site Proton donor is the Glu469.

This sequence belongs to the glycosyl hydrolase 13 family. GlgB subfamily. In terms of assembly, monomer.

The enzyme catalyses Transfers a segment of a (1-&gt;4)-alpha-D-glucan chain to a primary hydroxy group in a similar glucan chain.. Its pathway is glycan biosynthesis; glycogen biosynthesis. In terms of biological role, catalyzes the formation of the alpha-1,6-glucosidic linkages in glycogen by scission of a 1,4-alpha-linked oligosaccharide from growing alpha-1,4-glucan chains and the subsequent attachment of the oligosaccharide to the alpha-1,6 position. In Shewanella baltica (strain OS223), this protein is 1,4-alpha-glucan branching enzyme GlgB.